A 1221-amino-acid chain; its full sequence is DNA replication helicase (1221 aa).

Positions 692 to 701 match the Nuclear localization signal motif; sequence PKCKCYKKIK. 917 to 924 contacts ATP; that stretch reads GEPGSGKS. Positions 967–981 form a DNA-binding region, H-T-H motif; it reads INELKQCSESYFKKH.

As to quaternary structure, interacts with IE1 and LEF-3.

It localises to the host nucleus. It carries out the reaction ATP + H2O = ADP + phosphate + H(+). Essential for initiation of viral DNA replication, it may contribute to other functions such as controlling the switch to the late phase and leading to the inhibition of host protein synthesis. Required for late and very late gene expression. This chain is DNA replication helicase (HELI), found in Lepidoptera (butterflies and moths).